The primary structure comprises 255 residues: Electron transfer flavoprotein subunit beta (255 aa).

An N-acetylalanine modification is found at A2. Residues A9, 39 to 42, C66, and 123 to 134 each bind AMP; these read NPFC and GKQAIDDDCNQT. Positions 183 to 205 are recognition loop; it reads ADLRLNEPRYATLPNIMKAKKKK. K200 carries the N6,N6,N6-trimethyllysine; by ETFBKMT; alternate modification. K200 carries the N6-acetyllysine; alternate modification. K200 bears the N6-methyllysine; alternate mark. K203 carries the N6,N6,N6-trimethyllysine; by ETFBKMT modification. The residue at position 210 (K210) is an N6-acetyllysine; alternate. K210 is subject to N6-succinyllysine; alternate. Phosphoserine is present on residues S223 and S226. K238 bears the N6-acetyllysine mark. K248 carries the post-translational modification N6-acetyllysine; alternate. An N6-succinyllysine; alternate modification is found at K248.

The protein belongs to the ETF beta-subunit/FixA family. In terms of assembly, heterodimer composed of ETFA and ETFB. Identified in a complex that contains ETFA, ETFB and ETFRF1. Interacts with ACADM. Methylated. Trimethylation at Lys-200 and Lys-203 may negatively regulate the activity in electron transfer from acyl-CoA dehydrogenases.

The protein localises to the mitochondrion matrix. Heterodimeric electron transfer flavoprotein that accepts electrons from several mitochondrial dehydrogenases, including acyl-CoA dehydrogenases, glutaryl-CoA and sarcosine dehydrogenase. It transfers the electrons to the main mitochondrial respiratory chain via ETF-ubiquinone oxidoreductase. Required for normal mitochondrial fatty acid oxidation and normal amino acid metabolism. ETFB binds an AMP molecule that probably has a purely structural role. This chain is Electron transfer flavoprotein subunit beta, found in Mus musculus (Mouse).